Reading from the N-terminus, the 651-residue chain is Receptor-like serine/threonine-protein kinase At4g25390 (651 aa).

A signal peptide spans 1–25 (MPSRSISAPVPVLAPAPIVSSLVPA). Residues 26-40 (APSGHQNKTTRIFPP) lie on the Extracellular side of the membrane. Residue N32 is glycosylated (N-linked (GlcNAc...) asparagine). The helical transmembrane segment at 41-61 (FVVAGAGAGFSLFITLSVCFC) threads the bilayer. Over 62 to 651 (KFSRKRSSPP…PLKTTRKQRR (590 aa)) the chain is Cytoplasmic. The tract at residues 66–87 (KRSSPPAENASSSPRRPSPREF) is disordered. A compositionally biased stretch (low complexity) spans 69-87 (SPPAENASSSPRRPSPREF). Residues 99 to 633 (FSQANRLGQG…LKGEVNLPEL (535 aa)) enclose the Protein kinase domain. ATP contacts are provided by residues 105–113 (LGQGGFGVV) and K127. D225 serves as the catalytic Proton acceptor.

Belongs to the protein kinase superfamily. Ser/Thr protein kinase family.

It localises to the cell membrane. The enzyme catalyses L-seryl-[protein] + ATP = O-phospho-L-seryl-[protein] + ADP + H(+). It catalyses the reaction L-threonyl-[protein] + ATP = O-phospho-L-threonyl-[protein] + ADP + H(+). The chain is Receptor-like serine/threonine-protein kinase At4g25390 from Arabidopsis thaliana (Mouse-ear cress).